Reading from the N-terminus, the 129-residue chain is Follitropin subunit beta (129 aa).

Residues 1 to 18 (MKTLQFFFLFCCWKAICC) form the signal peptide. Disulfide bonds link Cys-21–Cys-69, Cys-35–Cys-84, Cys-38–Cys-122, Cys-46–Cys-100, Cys-50–Cys-102, and Cys-105–Cys-112. N-linked (GlcNAc...) asparagine glycosylation is found at Asn-25 and Asn-42.

The protein belongs to the glycoprotein hormones subunit beta family. In terms of assembly, heterodimer. The active follitropin is a heterodimer composed of an alpha chain/CGA shared with other hormones and a unique beta chain/FSHB shown here.

It is found in the secreted. In terms of biological role, together with the alpha chain CGA constitutes follitropin, the follicle-stimulating hormone, and provides its biological specificity to the hormone heterodimer. Binds FSHR, a G protein-coupled receptor, on target cells to activate downstream signaling pathways. Follitropin is involved in follicle development and spermatogenesis in reproductive organs. The chain is Follitropin subunit beta (FSHB) from Homo sapiens (Human).